A 184-amino-acid chain; its full sequence is Peptide methionine sulfoxide reductase (184 aa).

The residue at position 58 (serine 58) is a Phosphoserine.

Belongs to the MsrA Met sulfoxide reductase family.

It carries out the reaction L-methionyl-[protein] + [thioredoxin]-disulfide + H2O = L-methionyl-(S)-S-oxide-[protein] + [thioredoxin]-dithiol. The catalysed reaction is [thioredoxin]-disulfide + L-methionine + H2O = L-methionine (S)-S-oxide + [thioredoxin]-dithiol. Functionally, has an important function as a repair enzyme for proteins that have been inactivated by oxidation. Catalyzes the reversible oxidation-reduction of methionine sulfoxide in proteins to methionine. Also able to reduce dimethyl sulfoxide (DMSO) as well, with DMS as the product. The polypeptide is Peptide methionine sulfoxide reductase (MXR1) (Saccharomyces cerevisiae (strain ATCC 204508 / S288c) (Baker's yeast)).